Here is a 76-residue protein sequence, read N- to C-terminus: RNA-binding protein KhpA (76 aa).

The 48-residue stretch at 29–76 folds into the KH domain; that stretch reads SLTYKLSVSKEDMGRVIGKQGRIAKAIRTLVYAVGSKNDKKIRLEIIE.

This sequence belongs to the KhpA RNA-binding protein family. In terms of assembly, forms a complex with KhpB.

It is found in the cytoplasm. A probable RNA chaperone. Forms a complex with KhpB which binds to cellular RNA and controls its expression. Plays a role in peptidoglycan (PG) homeostasis and cell length regulation. This Listeria innocua serovar 6a (strain ATCC BAA-680 / CLIP 11262) protein is RNA-binding protein KhpA.